The following is a 198-amino-acid chain: Leucine-rich melanocyte differentiation-associated protein (198 aa).

LRR repeat units lie at residues glutamate 2 to serine 22, serine 26 to proline 47, arginine 48 to leucine 69, and alanine 75 to glutamate 95. The LRRCT domain occupies lysine 96–arginine 134.

In the embryo, expressed in melanoblasts. In the fetus, expressed in melanocytes. Not detected in retinal pigment epithelial cells.

Required for melanocyte differentiation. The protein is Leucine-rich melanocyte differentiation-associated protein of Homo sapiens (Human).